A 239-amino-acid polypeptide reads, in one-letter code: Ribonuclease PH (239 aa).

Residues arginine 87 and 125 to 127 (GTR) contribute to the phosphate site.

The protein belongs to the RNase PH family. Homohexameric ring arranged as a trimer of dimers.

It carries out the reaction tRNA(n+1) + phosphate = tRNA(n) + a ribonucleoside 5'-diphosphate. Phosphorolytic 3'-5' exoribonuclease that plays an important role in tRNA 3'-end maturation. Removes nucleotide residues following the 3'-CCA terminus of tRNAs; can also add nucleotides to the ends of RNA molecules by using nucleoside diphosphates as substrates, but this may not be physiologically important. Probably plays a role in initiation of 16S rRNA degradation (leading to ribosome degradation) during starvation. The protein is Ribonuclease PH of Saccharophagus degradans (strain 2-40 / ATCC 43961 / DSM 17024).